A 311-amino-acid chain; its full sequence is Probable acetylxylan esterase A (311 aa).

A signal peptide spans 1-19 (MAPFSFILTVLLYALTCSA). The active-site Charge relay system is the S153. N-linked (GlcNAc...) asparagine glycosylation is found at N197 and N224.

The protein belongs to the carbohydrate esterase 1 (CE1) family. AxeA subfamily. Monomer.

Its subcellular location is the secreted. The enzyme catalyses Deacetylation of xylans and xylo-oligosaccharides.. It functions in the pathway glycan degradation; xylan degradation. Acetylxylan esterase involved in the hydrolysis of xylan, a major structural heterogeneous polysaccharide found in plant biomass representing the second most abundant polysaccharide in the biosphere, after cellulose. Degrades acetylated xylans by cleaving acetyl side groups from the hetero-xylan backbone. This Aspergillus terreus (strain NIH 2624 / FGSC A1156) protein is Probable acetylxylan esterase A (axeA).